The chain runs to 139 residues: Putative nickel-responsive regulator (139 aa).

His-79, His-90, His-92, and Cys-98 together coordinate Ni(2+).

The protein belongs to the transcriptional regulatory CopG/NikR family. It depends on Ni(2+) as a cofactor.

In terms of biological role, transcriptional regulator. The polypeptide is Putative nickel-responsive regulator (Anaeromyxobacter dehalogenans (strain 2CP-C)).